The sequence spans 507 residues: ATP synthase subunit alpha (507 aa).

Positions 118-141 (VDGLGPIETTETRPIESPAPGVMD) are disordered. Position 172 to 179 (172 to 179 (GDRQTGKT)) interacts with ATP.

It belongs to the ATPase alpha/beta chains family. F-type ATPases have 2 components, CF(1) - the catalytic core - and CF(0) - the membrane proton channel. CF(1) has five subunits: alpha(3), beta(3), gamma(1), delta(1), epsilon(1). CF(0) has three main subunits: a(1), b(2) and c(9-12). The alpha and beta chains form an alternating ring which encloses part of the gamma chain. CF(1) is attached to CF(0) by a central stalk formed by the gamma and epsilon chains, while a peripheral stalk is formed by the delta and b chains.

Its subcellular location is the cell membrane. The enzyme catalyses ATP + H2O + 4 H(+)(in) = ADP + phosphate + 5 H(+)(out). Its function is as follows. Produces ATP from ADP in the presence of a proton gradient across the membrane. The alpha chain is a regulatory subunit. In Anoxybacillus flavithermus (strain DSM 21510 / WK1), this protein is ATP synthase subunit alpha.